The following is a 205-amino-acid chain: Holliday junction branch migration complex subunit RuvA (205 aa).

Positions methionine 1 to arginine 64 are domain I. A domain II region spans residues serine 65–valine 143. Residues histidine 144 to alanine 154 are flexible linker. The interval alanine 154 to lysine 205 is domain III.

It belongs to the RuvA family. Homotetramer. Forms an RuvA(8)-RuvB(12)-Holliday junction (HJ) complex. HJ DNA is sandwiched between 2 RuvA tetramers; dsDNA enters through RuvA and exits via RuvB. An RuvB hexamer assembles on each DNA strand where it exits the tetramer. Each RuvB hexamer is contacted by two RuvA subunits (via domain III) on 2 adjacent RuvB subunits; this complex drives branch migration. In the full resolvosome a probable DNA-RuvA(4)-RuvB(12)-RuvC(2) complex forms which resolves the HJ.

Its subcellular location is the cytoplasm. In terms of biological role, the RuvA-RuvB-RuvC complex processes Holliday junction (HJ) DNA during genetic recombination and DNA repair, while the RuvA-RuvB complex plays an important role in the rescue of blocked DNA replication forks via replication fork reversal (RFR). RuvA specifically binds to HJ cruciform DNA, conferring on it an open structure. The RuvB hexamer acts as an ATP-dependent pump, pulling dsDNA into and through the RuvAB complex. HJ branch migration allows RuvC to scan DNA until it finds its consensus sequence, where it cleaves and resolves the cruciform DNA. The protein is Holliday junction branch migration complex subunit RuvA of Afipia carboxidovorans (strain ATCC 49405 / DSM 1227 / KCTC 32145 / OM5) (Oligotropha carboxidovorans).